A 480-amino-acid polypeptide reads, in one-letter code: Aromatic-L-amino-acid decarboxylase (480 aa).

M1 carries the post-translational modification N-acetylmethionine. 2 repeat units span residues 58-115 (RDIE…TELE) and 118-178 (MMDW…TQAA). The tract at residues 58-178 (RDIEKIIMPG…AASPELTQAA (121 aa)) is 2 X approximate tandem repeats. Residue T82 participates in substrate binding. Residues A148 and S149 each coordinate pyridoxal 5'-phosphate. H192 serves as a coordination point for substrate. Pyridoxal 5'-phosphate contacts are provided by T246 and N300. K303 carries the post-translational modification N6-(pyridoxal phosphate)lysine.

Belongs to the group II decarboxylase family. As to quaternary structure, homodimer. Requires pyridoxal 5'-phosphate as cofactor.

It carries out the reaction L-dopa + H(+) = dopamine + CO2. The catalysed reaction is 5-hydroxy-L-tryptophan + H(+) = serotonin + CO2. It functions in the pathway catecholamine biosynthesis; dopamine biosynthesis; dopamine from L-tyrosine: step 2/2. In terms of biological role, catalyzes the decarboxylation of L-3,4-dihydroxyphenylalanine (DOPA) to dopamine and L-5-hydroxytryptophan to serotonin. This Rattus norvegicus (Rat) protein is Aromatic-L-amino-acid decarboxylase.